The sequence spans 608 residues: Zinc finger protein 652 (608 aa).

Residue Ser57 is modified to Phosphoserine. Positions 61–232 are disordered; sequence VLADTKMSKP…KRATKEAKAP (172 aa). The segment covering 71-97 has biased composition (basic and acidic residues); it reads HLHETEEQPYFREPRAVSDVHTVKEDR. 2 stretches are compositionally biased toward acidic residues: residues 98 to 108 and 151 to 162; these read ENSDDTEEEEE and EEDEEETEEEAT. Ser100 carries the phosphoserine modification. Thr103 bears the Phosphothreonine mark. Over residues 194–208 the composition is skewed to low complexity; that stretch reads AASAAAATTSPAPRT. Phosphoserine is present on residues Ser196 and Ser203. Residues 244-267 form a C2H2-type 1 zinc finger; sequence LTCEKCPRVFNTRWYLEKHMNVTH. A C2H2-type 2; degenerate zinc finger spans residues 271 to 293; sequence QICDKCGKKFVLESELSLHQQTD. 6 C2H2-type zinc fingers span residues 298-321, 328-350, 356-378, 384-406, 412-434, and 440-462; these read IQCV…KIVH, FACE…MVAH, FTCE…SLQH, FRCE…MSIH, FMCQ…MKTH, and FICE…RRTH. Residues 468–491 form a C2H2-type 9; degenerate zinc finger; sequence YPCDVCGQRFRFSNMLKAHKEKCF. The mediates interaction with CBFA2T3 stretch occupies residues 497–608; sequence VNVPPAVQIP…KNSAAPAQHH (112 aa).

The protein belongs to the krueppel C2H2-type zinc-finger protein family. As to quaternary structure, interacts with CBFA2T3.

The protein localises to the nucleus. Its function is as follows. Functions as a transcriptional repressor. In Mus musculus (Mouse), this protein is Zinc finger protein 652 (Znf652).